Here is a 411-residue protein sequence, read N- to C-terminus: F-box/kelch-repeat protein At3g61590 (411 aa).

Positions 37–83 (FSMDSLLPDDLLERILSFLPIASIFRAGTVCKRWNEIVSSRRFLCNF) constitute an F-box domain. Kelch repeat units follow at residues 81–135 (CNFS…SSCG), 137–178 (VCFM…MSTS), 196–246 (SIVK…ICNN), 251–299 (MIYS…LMNL), 302–350 (RLVI…EFDE), and 352–401 (FASS…FTGF).

In terms of assembly, part of a SCF (ASK-cullin-F-box) protein ligase complex. Interacts with SKP1A/ASK1, SKP1B/ASK2, ASK3, ASK9, ASK11, ASK12, ASK13, ASK14, ASK16 and ASK18.

The protein operates within protein modification; protein ubiquitination. Functionally, component of SCF(ASK-cullin-F-box) E3 ubiquitin ligase complexes, which may mediate the ubiquitination and subsequent proteasomal degradation of target proteins. The chain is F-box/kelch-repeat protein At3g61590 from Arabidopsis thaliana (Mouse-ear cress).